Consider the following 390-residue polypeptide: Cell division protein FtsZ (390 aa).

Residues 21–25, 108–110, Glu139, Arg143, and Asp187 each bind GTP; these read GGGNN and GTG. The segment at 315–390 is disordered; that stretch reads FDDKPTSHGR…EERRSRRTRR (76 aa). Residues 326-360 show a composition bias toward polar residues; it reads SGSTGFGTSVNTSSNATSKDESFTSNSSNAQATDS. Basic and acidic residues predominate over residues 361-384; sequence VSERTHTTKEDDIPSFIRNREERR.

Belongs to the FtsZ family. As to quaternary structure, homodimer. Polymerizes to form a dynamic ring structure in a strictly GTP-dependent manner. Interacts directly with several other division proteins.

It is found in the cytoplasm. Its function is as follows. Essential cell division protein that forms a contractile ring structure (Z ring) at the future cell division site. The regulation of the ring assembly controls the timing and the location of cell division. One of the functions of the FtsZ ring is to recruit other cell division proteins to the septum to produce a new cell wall between the dividing cells. Binds GTP and shows GTPase activity. The protein is Cell division protein FtsZ of Staphylococcus aureus (strain NCTC 8325 / PS 47).